Consider the following 364-residue polypeptide: 4-hydroxythreonine-4-phosphate dehydrogenase (364 aa).

Substrate contacts are provided by H138 and T139. Positions 169, 214, and 269 each coordinate a divalent metal cation. Substrate is bound by residues K277, N286, and R295.

Belongs to the PdxA family. In terms of assembly, homodimer. Requires a divalent metal cation as cofactor.

It is found in the cytoplasm. The catalysed reaction is 4-(phosphooxy)-L-threonine + NAD(+) = 3-amino-2-oxopropyl phosphate + CO2 + NADH. It functions in the pathway cofactor biosynthesis; pyridoxine 5'-phosphate biosynthesis; pyridoxine 5'-phosphate from D-erythrose 4-phosphate: step 4/5. Functionally, catalyzes the NAD(P)-dependent oxidation of 4-(phosphooxy)-L-threonine (HTP) into 2-amino-3-oxo-4-(phosphooxy)butyric acid which spontaneously decarboxylates to form 3-amino-2-oxopropyl phosphate (AHAP). The protein is 4-hydroxythreonine-4-phosphate dehydrogenase of Bacteroides thetaiotaomicron (strain ATCC 29148 / DSM 2079 / JCM 5827 / CCUG 10774 / NCTC 10582 / VPI-5482 / E50).